The sequence spans 183 residues: Protein Dr1 (183 aa).

In terms of domain architecture, Histone-fold spans threonine 19–leucine 82. Positions glutamine 92–tyrosine 183 are repression of TATA-containing promoters. Residues alanine 155–tyrosine 183 form a disordered region. The span at glutamate 173–tyrosine 183 shows a compositional bias: acidic residues.

The protein belongs to the NC2 beta/DR1 family. As to quaternary structure, component of the Ada2a-containing (ATAC) complex composed of at least Ada2a, Atac1, Hcf, Ada3, Gcn5, Mocs2B, Charac-14, Atac3, Atac2, NC2beta and wds. Homodimer. Interacts with NC2-alpha/Drap1 to form the dNC2 complex.

The protein localises to the nucleus. Its function is as follows. Bifunctional basic transcription factor. Activates transcription of DPE (Downstream Promoter Element) containing promoters while repressing transcription of promoters which contain TATA elements. Together with Chrac-14, promotes nucleosome sliding of ATP-dependent nucleosome remodeling complexes. This chain is Protein Dr1 (NC2beta), found in Drosophila melanogaster (Fruit fly).